Here is a 318-residue protein sequence, read N- to C-terminus: Transaldolase (318 aa).

The active-site Schiff-base intermediate with substrate is the Lys-132.

This sequence belongs to the transaldolase family. Type 1 subfamily. In terms of assembly, homodimer.

Its subcellular location is the cytoplasm. It catalyses the reaction D-sedoheptulose 7-phosphate + D-glyceraldehyde 3-phosphate = D-erythrose 4-phosphate + beta-D-fructose 6-phosphate. Its pathway is carbohydrate degradation; pentose phosphate pathway; D-glyceraldehyde 3-phosphate and beta-D-fructose 6-phosphate from D-ribose 5-phosphate and D-xylulose 5-phosphate (non-oxidative stage): step 2/3. Functionally, transaldolase is important for the balance of metabolites in the pentose-phosphate pathway. This is Transaldolase from Shewanella putrefaciens (strain CN-32 / ATCC BAA-453).